The sequence spans 319 residues: HTH-type transcriptional regulator YidZ (319 aa).

The 58-residue stretch at 8–65 folds into the HTH lysR-type domain; the sequence is LDLNLLLCLQLLMQERSVTKAAKRMNVTPSAVSKSLAKLRAWFDDPLFVNTPLGLAPT. The H-T-H motif DNA-binding region spans 25 to 44; the sequence is VTKAAKRMNVTPSAVSKSLA.

The protein belongs to the LysR transcriptional regulatory family.

Involved in anaerobic NO protection. The sequence is that of HTH-type transcriptional regulator YidZ from Salmonella agona (strain SL483).